The sequence spans 414 residues: Lipoyl synthase, mitochondrial (414 aa).

A mitochondrion-targeting transit peptide spans 1-18 (MYRRSVGVLFVGRNTRWI). A compositionally biased stretch (polar residues) spans 51–67 (GNSTEVENATSQLTGTS). The tract at residues 51–75 (GNSTEVENATSQLTGTSGKRRKGNR) is disordered. Residues Cys150, Cys155, Cys161, Cys181, Cys185, Cys188, and Ser396 each coordinate [4Fe-4S] cluster. The Radical SAM core domain occupies 164 to 385 (GKDKSKATAT…KERALEMGFL (222 aa)).

The protein belongs to the radical SAM superfamily. Lipoyl synthase family. [4Fe-4S] cluster serves as cofactor.

It is found in the mitochondrion. It carries out the reaction [[Fe-S] cluster scaffold protein carrying a second [4Fe-4S](2+) cluster] + N(6)-octanoyl-L-lysyl-[protein] + 2 oxidized [2Fe-2S]-[ferredoxin] + 2 S-adenosyl-L-methionine + 4 H(+) = [[Fe-S] cluster scaffold protein] + N(6)-[(R)-dihydrolipoyl]-L-lysyl-[protein] + 4 Fe(3+) + 2 hydrogen sulfide + 2 5'-deoxyadenosine + 2 L-methionine + 2 reduced [2Fe-2S]-[ferredoxin]. It functions in the pathway protein modification; protein lipoylation via endogenous pathway; protein N(6)-(lipoyl)lysine from octanoyl-[acyl-carrier-protein]: step 2/2. Catalyzes the radical-mediated insertion of two sulfur atoms into the C-6 and C-8 positions of the octanoyl moiety bound to the lipoyl domains of lipoate-dependent enzymes, thereby converting the octanoylated domains into lipoylated derivatives. This chain is Lipoyl synthase, mitochondrial, found in Saccharomyces cerevisiae (strain RM11-1a) (Baker's yeast).